The following is a 379-amino-acid chain: Putative 8-amino-7-oxononanoate synthase (379 aa).

Arginine 21 provides a ligand contact to substrate. A pyridoxal 5'-phosphate-binding site is contributed by 97–98 (GY). Histidine 122 is a binding site for substrate. Pyridoxal 5'-phosphate is bound by residues serine 169, 194–197 (DDAH), and 223–226 (TLSK). Position 226 is an N6-(pyridoxal phosphate)lysine (lysine 226). Position 340 (threonine 340) interacts with substrate.

Belongs to the class-II pyridoxal-phosphate-dependent aminotransferase family. BioF subfamily. As to quaternary structure, homodimer. It depends on pyridoxal 5'-phosphate as a cofactor.

The catalysed reaction is 6-carboxyhexanoyl-[ACP] + L-alanine + H(+) = (8S)-8-amino-7-oxononanoate + holo-[ACP] + CO2. Its pathway is cofactor biosynthesis; biotin biosynthesis. Its function is as follows. Catalyzes the decarboxylative condensation of pimeloyl-[acyl-carrier protein] and L-alanine to produce 8-amino-7-oxononanoate (AON), [acyl-carrier protein], and carbon dioxide. The polypeptide is Putative 8-amino-7-oxononanoate synthase (bioF) (Bacillus licheniformis (strain ATCC 14580 / DSM 13 / JCM 2505 / CCUG 7422 / NBRC 12200 / NCIMB 9375 / NCTC 10341 / NRRL NRS-1264 / Gibson 46)).